The following is a 277-amino-acid chain: Isoprenyl transferase 1 (277 aa).

Residues 1-30 (MAVRGILGRQRREYRTPEPHPSGARPPKLG) are disordered. The active site involves Asp-42. Asp-42 is a Mg(2+) binding site. Residues 43-46 (GNGR), Trp-47, Arg-55, His-59, and 87-89 (STE) contribute to the substrate site. The active-site Proton acceptor is the Asn-90. Residues Trp-91, Arg-93, Arg-210, and 216–218 (RTS) contribute to the substrate site. Residue Glu-229 coordinates Mg(2+).

This sequence belongs to the UPP synthase family. As to quaternary structure, homodimer. Mg(2+) is required as a cofactor.

Its function is as follows. Catalyzes the condensation of isopentenyl diphosphate (IPP) with allylic pyrophosphates generating different type of terpenoids. In Streptomyces coelicolor (strain ATCC BAA-471 / A3(2) / M145), this protein is Isoprenyl transferase 1.